Reading from the N-terminus, the 132-residue chain is MADQPQFKWAIAHIFSSFNNTIITVTDLTGAETLAKTSGGMVVKQDRNESSPYAAMQMAMNVAEQIKAKGIQGVHIRVRAPGGNHQRSPGPGAQAAIRSLARAGLRIGRIEDVTPIPHDGTRAPGGKRGRRV.

Residues 113-132 (VTPIPHDGTRAPGGKRGRRV) are disordered.

The protein belongs to the universal ribosomal protein uS11 family. In terms of assembly, part of the 30S ribosomal subunit.

In terms of biological role, located on the platform of the 30S subunit. The protein is Small ribosomal subunit protein uS11 of Methanocella arvoryzae (strain DSM 22066 / NBRC 105507 / MRE50).